Here is a 64-residue protein sequence, read N- to C-terminus: Large ribosomal subunit protein bL28 (64 aa).

Belongs to the bacterial ribosomal protein bL28 family.

The sequence is that of Large ribosomal subunit protein bL28 from Campylobacter lari (strain RM2100 / D67 / ATCC BAA-1060).